The chain runs to 597 residues: Alpha-1,2-mannosyltransferase MNN2 (597 aa).

Residues 1–6 are Cytoplasmic-facing; sequence MIAKQK. The helical transmembrane segment at 7 to 27 threads the bilayer; it reads IKILIGVIIVIATYHFIVSSN. The Extracellular segment spans residues 28-597; that stretch reads VRSKDLSDLV…ETAEIPTVVS (570 aa). Residues 39–89 form a disordered region; sequence LGSSDKSTTENERPKNNIVTNNRLDNPPNEDIPHAEPDSPPQEPPKSGNKP. N-linked (GlcNAc...) asparagine glycosylation is present at Asn382.

The protein belongs to the MNN1/MNT family. Mn(2+) is required as a cofactor.

Its subcellular location is the golgi apparatus membrane. Its pathway is protein modification; protein glycosylation. Enzyme activity is regulated by iron. In terms of biological role, alpha-1,2-mannosyltransferase required for cell wall integrity. Responsible for addition of the first alpha-1,2-linked mannose to form the branches on the mannan backbone of oligosaccharides. Addition of alpha-1,2-mannose is required for stabilization of the alpha-1,6-mannose backbone and hence regulates mannan fibril length; and is important for both immune recognition and virulence. Promotes iron uptake and usage along the endocytosis pathway under iron-limiting conditions. This chain is Alpha-1,2-mannosyltransferase MNN2 (MNN2), found in Candida albicans (strain SC5314 / ATCC MYA-2876) (Yeast).